Here is a 512-residue protein sequence, read N- to C-terminus: 2-isopropylmalate synthase (512 aa).

The Pyruvate carboxyltransferase domain occupies 4–266 (IQFFDTTLRD…ETNIVLNQFK (263 aa)). Mn(2+) contacts are provided by Asp13, His201, His203, and Asn237. Residues 390–512 (ELKHLQVQYV…TKQVDFEEVK (123 aa)) form a regulatory domain region.

It belongs to the alpha-IPM synthase/homocitrate synthase family. LeuA type 1 subfamily. As to quaternary structure, homodimer. The cofactor is Mn(2+).

The protein resides in the cytoplasm. The enzyme catalyses 3-methyl-2-oxobutanoate + acetyl-CoA + H2O = (2S)-2-isopropylmalate + CoA + H(+). It functions in the pathway amino-acid biosynthesis; L-leucine biosynthesis; L-leucine from 3-methyl-2-oxobutanoate: step 1/4. In terms of biological role, catalyzes the condensation of the acetyl group of acetyl-CoA with 3-methyl-2-oxobutanoate (2-ketoisovalerate) to form 3-carboxy-3-hydroxy-4-methylpentanoate (2-isopropylmalate). The sequence is that of 2-isopropylmalate synthase from Listeria welshimeri serovar 6b (strain ATCC 35897 / DSM 20650 / CCUG 15529 / CIP 8149 / NCTC 11857 / SLCC 5334 / V8).